A 64-amino-acid polypeptide reads, in one-letter code: Large ribosomal subunit protein bL35 (64 aa).

The protein belongs to the bacterial ribosomal protein bL35 family.

The chain is Large ribosomal subunit protein bL35 from Pseudomonas putida (strain W619).